The sequence spans 487 residues: GTPase Der (487 aa).

2 consecutive EngA-type G domains span residues 3–166 (PVIA…PRDA) and 193–366 (IKIA…KSAV). GTP is bound by residues 9 to 16 (GRPNVGKS), 56 to 60 (DTGGI), 118 to 121 (NKID), 199 to 206 (GRPNVGKS), 246 to 250 (DTAGV), and 311 to 314 (NKWD). Residues 367–451 (TRWPTSRLTQ…PIRIEYKGGE (85 aa)) enclose the KH-like domain. A compositionally biased stretch (basic and acidic residues) spans 449–461 (GGENPFEGKKNTL). Positions 449–487 (GGENPFEGKKNTLTDRQVNKKRRLMSHHKKAEKKRRDKR) are disordered. The segment covering 467–487 (NKKRRLMSHHKKAEKKRRDKR) has biased composition (basic residues).

Belongs to the TRAFAC class TrmE-Era-EngA-EngB-Septin-like GTPase superfamily. EngA (Der) GTPase family. In terms of assembly, associates with the 50S ribosomal subunit.

GTPase that plays an essential role in the late steps of ribosome biogenesis. The protein is GTPase Der of Pseudomonas putida (strain GB-1).